Reading from the N-terminus, the 454-residue chain is Guanine deaminase (454 aa).

2 residues coordinate Zn(2+): His82 and His84. Residues 84–87 (HASQ), 213–214 (RF), 240–243 (HISE), and Asp330 each bind substrate. Zn(2+) contacts are provided by His240 and Asp330. Residue Ser453 is modified to Phosphoserine.

It belongs to the metallo-dependent hydrolases superfamily. ATZ/TRZ family. Homodimer. Zn(2+) is required as a cofactor.

The enzyme catalyses guanine + H2O + H(+) = xanthine + NH4(+). It participates in purine metabolism; guanine degradation; xanthine from guanine: step 1/1. Functionally, catalyzes the hydrolytic deamination of guanine, producing xanthine and ammonia. The polypeptide is Guanine deaminase (Homo sapiens (Human)).